A 259-amino-acid polypeptide reads, in one-letter code: Ribonuclease PH (259 aa).

Phosphate contacts are provided by residues arginine 88 and 126–128; that span reads GTR.

This sequence belongs to the RNase PH family. Homohexameric ring arranged as a trimer of dimers.

It catalyses the reaction tRNA(n+1) + phosphate = tRNA(n) + a ribonucleoside 5'-diphosphate. Its function is as follows. Phosphorolytic 3'-5' exoribonuclease that plays an important role in tRNA 3'-end maturation. Removes nucleotide residues following the 3'-CCA terminus of tRNAs; can also add nucleotides to the ends of RNA molecules by using nucleoside diphosphates as substrates, but this may not be physiologically important. Probably plays a role in initiation of 16S rRNA degradation (leading to ribosome degradation) during starvation. This is Ribonuclease PH from Mycolicibacterium smegmatis (strain ATCC 700084 / mc(2)155) (Mycobacterium smegmatis).